Consider the following 203-residue polypeptide: Large ribosomal subunit protein bL25 (203 aa).

It belongs to the bacterial ribosomal protein bL25 family. CTC subfamily. In terms of assembly, part of the 50S ribosomal subunit; part of the 5S rRNA/L5/L18/L25 subcomplex. Contacts the 5S rRNA. Binds to the 5S rRNA independently of L5 and L18.

This is one of the proteins that binds to the 5S RNA in the ribosome where it forms part of the central protuberance. The protein is Large ribosomal subunit protein bL25 of Dechloromonas aromatica (strain RCB).